The primary structure comprises 349 residues: tRNA N6-adenosine threonylcarbamoyltransferase (349 aa).

H115 and H119 together coordinate Fe cation. Residues 137–141 (LASGG), D170, G183, and N281 contribute to the substrate site. D309 lines the Fe cation pocket.

Belongs to the KAE1 / TsaD family. Fe(2+) serves as cofactor.

It is found in the cytoplasm. It carries out the reaction L-threonylcarbamoyladenylate + adenosine(37) in tRNA = N(6)-L-threonylcarbamoyladenosine(37) in tRNA + AMP + H(+). Required for the formation of a threonylcarbamoyl group on adenosine at position 37 (t(6)A37) in tRNAs that read codons beginning with adenine. Is involved in the transfer of the threonylcarbamoyl moiety of threonylcarbamoyl-AMP (TC-AMP) to the N6 group of A37, together with TsaE and TsaB. TsaD likely plays a direct catalytic role in this reaction. The sequence is that of tRNA N6-adenosine threonylcarbamoyltransferase from Methylobacterium nodulans (strain LMG 21967 / CNCM I-2342 / ORS 2060).